We begin with the raw amino-acid sequence, 336 residues long: Heme A synthase (336 aa).

8 helical membrane passes run 12 to 32 (LKLW…VGGL), 97 to 117 (LLAR…TLYF), 130 to 150 (IFFL…SGLI), 161 to 181 (SIHL…ILDI), 194 to 214 (LFLL…AFLS), 256 to 276 (FLHR…NFIY), 285 to 305 (YVLF…ITLI), and 310 to 330 (ITYA…YFLI). Residue histidine 258 participates in heme binding. Histidine 316 is a heme binding site.

The protein belongs to the COX15/CtaA family. Type 2 subfamily. In terms of assembly, interacts with CtaB. The cofactor is heme b.

The protein localises to the cell membrane. It carries out the reaction Fe(II)-heme o + 2 A + H2O = Fe(II)-heme a + 2 AH2. The protein operates within porphyrin-containing compound metabolism; heme A biosynthesis; heme A from heme O: step 1/1. In terms of biological role, catalyzes the conversion of heme O to heme A by two successive hydroxylations of the methyl group at C8. The first hydroxylation forms heme I, the second hydroxylation results in an unstable dihydroxymethyl group, which spontaneously dehydrates, resulting in the formyl group of heme A. The sequence is that of Heme A synthase from Pelagibacter ubique (strain HTCC1062).